Here is an 805-residue protein sequence, read N- to C-terminus: Sucrose synthase (805 aa).

The segment at 275–752 (MVFNVVILSP…GLKRIQEKYT (478 aa)) is GT-B glycosyltransferase.

This sequence belongs to the glycosyltransferase 1 family. Plant sucrose synthase subfamily.

The catalysed reaction is an NDP-alpha-D-glucose + D-fructose = a ribonucleoside 5'-diphosphate + sucrose + H(+). In terms of biological role, sucrose-cleaving enzyme that provides UDP-glucose and fructose for various metabolic pathways. This is Sucrose synthase from Solanum tuberosum (Potato).